The primary structure comprises 633 residues: Extracellular metalloproteinase 3 (633 aa).

Positions 1–18 (MHGLLLAGLLALPMNVLA) are cleaved as a signal peptide. The propeptide occupies 19–246 (YPAEQHASNV…VHNVVDYVAS (228 aa)). N-linked (GlcNAc...) asparagine glycosylation occurs at asparagine 410. Histidine 429 contributes to the Zn(2+) binding site. Glutamate 430 is a catalytic residue. Residue histidine 433 coordinates Zn(2+). N-linked (GlcNAc...) asparagine glycans are attached at residues asparagine 480 and asparagine 622.

Belongs to the peptidase M36 family. Requires Zn(2+) as cofactor.

Its subcellular location is the secreted. Secreted metalloproteinase probably acting as a virulence factor. The polypeptide is Extracellular metalloproteinase 3 (MEP3) (Trichophyton rubrum (Athlete's foot fungus)).